Consider the following 1372-residue polypeptide: Paired amphipathic helix protein Sin3-like 1 (1372 aa).

The tract at residues 1–50 is disordered; that stretch reads MKRIRDDVYASGSQFRRPLGSSRGQLCGQSPVHGSGDTEEEEEGGSRRVS. PAH domains follow at residues 51–121 and 136–206; these read QKLT…LPKG and KTVE…LPAS. The span at 210 to 222 shows a compositional bias: low complexity; that stretch reads HSAAQHSRSQAQQ. Disordered stretches follow at residues 210 to 244 and 272 to 323; these read HSAA…ERRR and REQR…SGSA. The span at 272–315 shows a compositional bias: basic and acidic residues; sequence REQRKRLDKENRARRGRDLDDREAGQDNLHHFPEKRKSSRRAEA. The PAH 3 domain occupies 331–400; that stretch reads LKSMYKQAFV…DEFNQFFERC (70 aa). 3 disordered regions span residues 764–783, 791–817, and 934–1056; these read DVNH…GGDT, LKSA…NKDS, and GLRS…AEGM. Residues 938-957 show a composition bias toward basic and acidic residues; that stretch reads DSSKGTRNSDDPEGPSRNEK. Composition is skewed to acidic residues over residues 990–1013 and 1028–1042; these read AEAE…DSEN and SQDE…EHDE. Serine 1049 is modified (phosphoserine).

Interacts (via PAH3) with ALY2. Interacts (via PAH2) with TBP1. Interacts with ALY3, GATA21, TRP2, TKI1, VAL1, SKP1B, FBX5 and PUB14.

It is found in the nucleus. Functionally, acts as a transcriptional repressor. A histone deacetylase (HDAC) activity is required for transcription repression. May play a role in telomere stability. The protein is Paired amphipathic helix protein Sin3-like 1 (SNL1) of Arabidopsis thaliana (Mouse-ear cress).